The primary structure comprises 1175 residues: Potassium/sodium hyperpolarization-activated cyclic nucleotide-gated channel 4 (1175 aa).

At 1 to 259 (MDKLPPSMRK…SAGFWIIHPY (259 aa)) the chain is on the cytoplasmic side. Residues 17-186 (QQVGAKAWIM…SSCGEQRPAD (170 aa)) are disordered. Acidic residues predominate over residues 26 to 36 (MDEEEDAEEEG). Residues 60-75 (PSAAAAAAGGAESRGA) show a composition bias toward low complexity. Residues 111–126 (SRGGGGGGGSTGGGSH) are compositionally biased toward gly residues. Basic and acidic residues predominate over residues 128–140 (HLHDSAEERRLIA). At Ser-145 the chain carries Phosphoserine. Over residues 162-175 (PGAPAPPAASPPQV) the composition is skewed to pro residues. Residues 260–288 (SDFRFYWDLTMLLLMVGNLIIIPVGITFF) traverse the membrane as a helical segment. Residues 289–292 (KDEN) lie on the Extracellular side of the membrane. A helical transmembrane segment spans residues 293–316 (TTPWIVFNVVSDTFFLIDLVLNFR). Residues 317–329 (TGIVVEDNTDIIL) are Cytoplasmic-facing. The chain crosses the membrane as a helical span at residues 330–352 (DPRRIKMKYLKSWFVVDFVSSIP). Residues 353-374 (VDYIFLIVETRIDSEVYKTARA) are Extracellular-facing. A helical; Voltage-sensor membrane pass occupies residues 375 to 410 (LRIVRFTKILSLLRLLRLSRLIRYIHQWEEIFHMTY). Topologically, residues 411 to 413 (DLA) are cytoplasmic. A helical membrane pass occupies residues 414–444 (SAVVRIVNLIGMMLLLCHWDGCLQFLVPMLQ). Topologically, residues 445-449 (DFPDD) are extracellular. The segment at residues 450 to 478 (CWVSLNNMVNNSWGKQYSYALFKAMSHML) is an intramembrane region (pore-forming). Residues 479–488 (CIGYGRQAPM) are Extracellular-facing. The chain crosses the membrane as a helical span at residues 489-521 (GMSDVWLTMLSMIVGATCYAMFIGHATALIQSL). Topologically, residues 522–1175 (DSSRRQYQEK…PVRSKLPSNL (654 aa)) are cytoplasmic. Positions 560, 563, 565, and 567 each coordinate 3',5'-cyclic GMP. Residues Gly-660, Glu-661, Cys-663, Arg-670, Thr-671, Val-674, and Arg-711 each coordinate 3',5'-cyclic AMP. Disordered regions lie at residues 801–820 (AIFRPPPGPTTLGSLGAGQT) and 830–1175 (LAPS…PSNL). Composition is skewed to low complexity over residues 839 to 854 (SPASSPSQPDTPSSAS), 900 to 912 (LGGSLSSSDSPLL), 948 to 966 (SPTSSPGQLGQPPGELSPG), and 984 to 1004 (RLPFAAGASAGASPVAFSPRG). Positions 1038–1050 (ASSPPPPPPPPAP) are enriched in pro residues. Ser-1089 and Ser-1093 each carry phosphoserine. Over residues 1102-1114 (PPFPRAPGRPPGA) the composition is skewed to pro residues.

The protein belongs to the potassium channel HCN family. As to quaternary structure, homotetramer. The channel is composed of a homo- or heterotetrameric complex of pore-forming subunits. Interacts with PEX5L with a 4:4 HCN4:PEX5L stoichiometry; reduces the effects of cAMP on the voltage-dependence and rate of activation. Interacts with IRAG1; regulates HCN4 channel activity. Interacts with IRAG2; regulates HCN4 channel activity. S-palmitoylated. In terms of tissue distribution, highly expressed in the heart sinoatrial node (SAN). Not detected in atrium, ventricle, forebrain or cerebellum. Detected at very low levels in total brain.

It is found in the cell membrane. It carries out the reaction K(+)(in) = K(+)(out). The catalysed reaction is Na(+)(in) = Na(+)(out). Activated by cAMP and to a lesser extent by cGMP and cCMP. cAMP binding causes a conformation change that leads to the assembly of an active tetramer and channel opening by shifting the voltage-dependency towards more positive voltages. Binding of cAMP removes a tonic inhibition conferred by cyclic nucleotide-binding domain (CNBD) on channel opening. Cyclic dinucleotides can modulate HCN4 channel; cyclic dinucleotides acting as potent antagonists of cAMP. Inhibited by extracellular Cs(+) ions. Auxiliary subunits can also regulate HCN4 channel. IRAG1 causes a gain-of-function by shifting HCN4 activation to more depolarized membrane potentials in the absence of cAMP. In contrast, IRAG2 causes a loss-of-function by inhibiting cAMP-dependent potentiation of HCN4 activation. Functionally, hyperpolarization-activated ion channel that are permeable to Na(+) and K(+) ions with very slow activation and inactivation. Exhibits higher selectivity for K(+) over Na(+) ions. Contributes to the native pacemaker currents in heart (If) that regulate the rhythm of heart beat. Contributes to the native pacemaker currents in neurons (Ih). May mediate responses to sour stimuli. The sequence is that of Potassium/sodium hyperpolarization-activated cyclic nucleotide-gated channel 4 (HCN4) from Oryctolagus cuniculus (Rabbit).